Reading from the N-terminus, the 399-residue chain is A-type ATP synthase subunit C (399 aa).

This sequence belongs to the V-ATPase V0D/AC39 subunit family. In terms of assembly, the A-type ATPase is composed of subunits A(3), B(3), C, D, E(1 or 2), F, H(2), I and K(x).

It is found in the cell membrane. In terms of biological role, component of the A-type ATP synthase that produces ATP from ADP in the presence of a proton gradient across the membrane. In Methanocaldococcus jannaschii (strain ATCC 43067 / DSM 2661 / JAL-1 / JCM 10045 / NBRC 100440) (Methanococcus jannaschii), this protein is A-type ATP synthase subunit C.